The sequence spans 173 residues: Translation initiation factor IF-3 (173 aa).

The protein belongs to the IF-3 family. As to quaternary structure, monomer.

The protein localises to the cytoplasm. In terms of biological role, IF-3 binds to the 30S ribosomal subunit and shifts the equilibrium between 70S ribosomes and their 50S and 30S subunits in favor of the free subunits, thus enhancing the availability of 30S subunits on which protein synthesis initiation begins. The sequence is that of Translation initiation factor IF-3 from Enterococcus faecalis (strain ATCC 700802 / V583).